The following is a 496-amino-acid chain: MFESAEVGHSIDKDTYEKAVIELREALLEAQFELKQQARFPVIILINGIEGAGKGETVKLLNEWMDPRLIEVQSFLRPSDEELERPPQWRFWRRLPPKGRTGIFFGNWYSQMLYARVEGHIKEAKLDQAIDAAERFERMLCDEGALLFKFWFHLSKKQLKERLKALEKDPQHSWKLSPLDWKQSEVYDRFVHYGERVLRRTSRDYAPWYVVEGADERYRALTVGRILLEGLQAALATKERAKRQPHAAPLVSSLDNRGLLDSLDLGQYLDKDAYKEQLAAEQARLAGLIRDKRFRQHSLVAVFEGNDAAGKGGAIRRVTDALDPRQYHIVPIAAPTEEERAQPYLWRFWRHIPARRQFTIFDRSWYGRVLVERIEGFCAPADWLRAYGEINDFEEQLSEYGIIVVKFWLAIDKQTQMERFKEREKTPYKRYKITEEDWRNRDKWDQYVDAVGDMVDRTSTEIAPWTLVEANDKRFARVKVLRTINDAIEAAYKKDK.

PPK2 regions lie at residues I11–A234 and L269–D495.

It belongs to the polyphosphate kinase 2 (PPK2) family. Class II subfamily. As to quaternary structure, homodimer. Mg(2+) serves as cofactor.

It carries out the reaction [phosphate](n) + ADP = [phosphate](n+1) + AMP. Its function is as follows. Uses inorganic polyphosphate (polyP) as a donor to convert AMP to ADP. Can also convert GMP to GDP, with lower efficiency. Cannot dephosphorylate ADP in the presence of polyP. This is Polyphosphate:AMP phosphotransferase from Pseudomonas aeruginosa (strain ATCC 15692 / DSM 22644 / CIP 104116 / JCM 14847 / LMG 12228 / 1C / PRS 101 / PAO1).